Here is a 417-residue protein sequence, read N- to C-terminus: DnaJ protein homolog ANJ1 (417 aa).

One can recognise a J domain in the interval 11–76; it reads STRYYEILGV…REIYDQYGED (66 aa). The CR-type zinc-finger motif lies at 135 to 219; sequence GTTKKLSLSR…CKGEKVVQEK (85 aa). 3 CXXCXGXG motif repeats span residues 148 to 155, 164 to 171, and 191 to 198; these read CSKCTGKG, CSGCQGTG, and CNECKGTG. The stretch at 207–214 is one CXXCXGXG motif; approximate repeat; sequence CPQCKGEK. The segment at 384–417 is disordered; the sequence is IEEEMKRKQTQAQQEAYDEDDEPAGGQRVQCAQQ. Residue Cys-414 is modified to Cysteine methyl ester. Cys-414 carries S-farnesyl cysteine lipidation. A propeptide spans 415–417 (removed in mature form); it reads AQQ.

The protein localises to the membrane. Functionally, plays a continuous role in plant development probably in the structural organization of compartments. This chain is DnaJ protein homolog ANJ1, found in Atriplex nummularia (Old man saltbush).